Here is a 371-residue protein sequence, read N- to C-terminus: DNA primase large subunit PriL (371 aa).

Positions 230, 301, 310, and 317 each coordinate [4Fe-4S] cluster. Residues 337 to 371 are disordered; sequence EREKEEGKEKGNEEKKEKREEHEKKNEKGNEIKEK.

It belongs to the eukaryotic-type primase large subunit family. Heterodimer of a small subunit (PriS) and a large subunit (PriL). [4Fe-4S] cluster is required as a cofactor.

Functionally, regulatory subunit of DNA primase, an RNA polymerase that catalyzes the synthesis of short RNA molecules used as primers for DNA polymerase during DNA replication. Stabilizes and modulates the activity of the small subunit, increasing the rate of DNA synthesis, and conferring RNA synthesis capability. The DNA polymerase activity may enable DNA primase to also catalyze primer extension after primer synthesis. May also play a role in DNA repair. The sequence is that of DNA primase large subunit PriL from Methanosarcina acetivorans (strain ATCC 35395 / DSM 2834 / JCM 12185 / C2A).